An 89-amino-acid polypeptide reads, in one-letter code: Small ribosomal subunit protein uS15 (89 aa).

Belongs to the universal ribosomal protein uS15 family. As to quaternary structure, part of the 30S ribosomal subunit. Forms a bridge to the 50S subunit in the 70S ribosome, contacting the 23S rRNA.

Its function is as follows. One of the primary rRNA binding proteins, it binds directly to 16S rRNA where it helps nucleate assembly of the platform of the 30S subunit by binding and bridging several RNA helices of the 16S rRNA. Functionally, forms an intersubunit bridge (bridge B4) with the 23S rRNA of the 50S subunit in the ribosome. In Desulfosudis oleivorans (strain DSM 6200 / JCM 39069 / Hxd3) (Desulfococcus oleovorans), this protein is Small ribosomal subunit protein uS15.